The following is a 228-amino-acid chain: Phosphoribosylformylglycinamidine synthase subunit PurQ (228 aa).

Positions 2–225 (KAAVISFPGS…INQTEGADVR (224 aa)) constitute a Glutamine amidotransferase type-1 domain. The Nucleophile role is filled by Cys-86. Residues His-194 and Glu-196 contribute to the active site.

Part of the FGAM synthase complex composed of 1 PurL, 1 PurQ and 2 PurS subunits.

It localises to the cytoplasm. The enzyme catalyses N(2)-formyl-N(1)-(5-phospho-beta-D-ribosyl)glycinamide + L-glutamine + ATP + H2O = 2-formamido-N(1)-(5-O-phospho-beta-D-ribosyl)acetamidine + L-glutamate + ADP + phosphate + H(+). The catalysed reaction is L-glutamine + H2O = L-glutamate + NH4(+). Its pathway is purine metabolism; IMP biosynthesis via de novo pathway; 5-amino-1-(5-phospho-D-ribosyl)imidazole from N(2)-formyl-N(1)-(5-phospho-D-ribosyl)glycinamide: step 1/2. In terms of biological role, part of the phosphoribosylformylglycinamidine synthase complex involved in the purines biosynthetic pathway. Catalyzes the ATP-dependent conversion of formylglycinamide ribonucleotide (FGAR) and glutamine to yield formylglycinamidine ribonucleotide (FGAM) and glutamate. The FGAM synthase complex is composed of three subunits. PurQ produces an ammonia molecule by converting glutamine to glutamate. PurL transfers the ammonia molecule to FGAR to form FGAM in an ATP-dependent manner. PurS interacts with PurQ and PurL and is thought to assist in the transfer of the ammonia molecule from PurQ to PurL. This is Phosphoribosylformylglycinamidine synthase subunit PurQ from Lacticaseibacillus casei (strain BL23) (Lactobacillus casei).